The chain runs to 118 residues: Peptidyl-tRNA hydrolase (118 aa).

The protein belongs to the PTH2 family.

The protein localises to the cytoplasm. It catalyses the reaction an N-acyl-L-alpha-aminoacyl-tRNA + H2O = an N-acyl-L-amino acid + a tRNA + H(+). Its function is as follows. The natural substrate for this enzyme may be peptidyl-tRNAs which drop off the ribosome during protein synthesis. The sequence is that of Peptidyl-tRNA hydrolase from Thermococcus sibiricus (strain DSM 12597 / MM 739).